We begin with the raw amino-acid sequence, 712 residues long: Lactoperoxidase (712 aa).

The N-terminal stretch at 1–26 is a signal peptide; that stretch reads MRVLLHLPALLASLILLQAAASTTRA. The propeptide occupies 27-80; sequence QTTRTSAISDTVSQAKVQVNKAFLDSRTRLKTAMSSETPTSRQLSEYLKHAKGR. The N-linked (GlcNAc...) asparagine glycan is linked to N106. A disulfide bridge links C132 with C145. N212 carries an N-linked (GlcNAc...) asparagine glycan. D225 lines the heme b pocket. Catalysis depends on H226, which acts as the Proton acceptor. D227 serves as a coordination point for Ca(2+). 2 disulfides stabilise this stretch: C246-C256 and C250-C274. Ca(2+) contacts are provided by T301, F303, D305, and S307. Position 315 is a phosphoserine (S315). 2 N-linked (GlcNAc...) asparagine glycosylation sites follow: N322 and N358. C354 and C365 are disulfide-bonded. E375 and H468 together coordinate heme b. A 3'-nitrotyrosine modification is found at Y482. Intrachain disulfides connect C573/C630 and C671/C696.

The protein belongs to the peroxidase family. XPO subfamily. Requires Ca(2+) as cofactor. The cofactor is heme b. As to expression, mammary gland, milk and salivary gland. Found in bronchial submucosal glands.

It localises to the secreted. It is found in the cytoplasm. The catalysed reaction is 2 a phenolic donor + H2O2 = 2 a phenolic radical donor + 2 H2O. It catalyses the reaction thiocyanate + H2O2 + H(+) = hypothiocyanous acid + H2O. The enzyme catalyses iodide + H2O2 = hypoiodite + H2O. Its function is as follows. Heme-containing oxidoreductase which catalyzes the conversion of thiocyanate (SCN(-)) into antimicrobial agent hypothiocyanous acid (OSCN(-)) in the presence of hydrogen peroxide (H2O2). Also involved in the conversion of iodide (I(-)) into hypoiodite (IO(-)) in the presence of H2O2. Responsible for the inactivation of a wide range of micro-organisms and hence, important component of defense mechanism. Shows antibacterial properties against Pseudomonas aeruginosa. The lactoperoxidase-SCN(-)-H2O2 system shows antibacterial properties against Burkholderia cepacia and Haemophilus influenzae in vitro. Present in mammary and salivary gland secretions and may contribute to airway host defense against infection. May contribute to maintaining an appropriate H2O2 cellular level, therefore protecting cells from H2O2-caused injuries and inflammation. The protein is Lactoperoxidase of Homo sapiens (Human).